We begin with the raw amino-acid sequence, 271 residues long: MLLAIDVRNTHTVVGLISGSGDHAKVVQQWRIRTEPEVTADELALTIDGLIGDDAERLTGASGLSTVPSVLHEVRVMLEQYWPNVPHVLIEPGVRTGIPLLVDNPKEVGADRIVNCLAAYHKYGTAAIVVDFGSSICVDVVSAKGEFLGGAIAPGVQVSSDAAAARSAALRRVELTRPRSVIGKNTVECMQAGAVFGFAGLVDGLVNRIRDDVDGFSGADVAVVATGHTAPLVLPDLRTVEHYDRHLTLDGLRLVFERNRANQRGKLKPAR.

Residue 6–13 (DVRNTHTV) participates in ATP binding. Residue 109 to 112 (GADR) coordinates substrate. Catalysis depends on aspartate 111, which acts as the Proton acceptor. Aspartate 131 is a K(+) binding site. Serine 134 provides a ligand contact to ATP. Threonine 186 serves as a coordination point for substrate.

Belongs to the type III pantothenate kinase family. Homodimer. It depends on NH4(+) as a cofactor. K(+) serves as cofactor.

The protein resides in the cytoplasm. It carries out the reaction (R)-pantothenate + ATP = (R)-4'-phosphopantothenate + ADP + H(+). It participates in cofactor biosynthesis; coenzyme A biosynthesis; CoA from (R)-pantothenate: step 1/5. Catalyzes the phosphorylation of pantothenate (Pan), the first step in CoA biosynthesis. The sequence is that of Type III pantothenate kinase from Mycolicibacterium smegmatis (strain ATCC 700084 / mc(2)155) (Mycobacterium smegmatis).